Here is a 428-residue protein sequence, read N- to C-terminus: 3-phosphoshikimate 1-carboxyvinyltransferase (428 aa).

Residues Lys21, Ser22, and Arg26 each coordinate 3-phosphoshikimate. A phosphoenolpyruvate-binding site is contributed by Lys21. Gly91 and Arg119 together coordinate phosphoenolpyruvate. Ser164, Gln166, Asp311, and Lys338 together coordinate 3-phosphoshikimate. Gln166 lines the phosphoenolpyruvate pocket. Asp311 acts as the Proton acceptor in catalysis. Residues Arg342 and Arg383 each contribute to the phosphoenolpyruvate site.

Belongs to the EPSP synthase family. In terms of assembly, monomer.

It is found in the cytoplasm. It carries out the reaction 3-phosphoshikimate + phosphoenolpyruvate = 5-O-(1-carboxyvinyl)-3-phosphoshikimate + phosphate. The protein operates within metabolic intermediate biosynthesis; chorismate biosynthesis; chorismate from D-erythrose 4-phosphate and phosphoenolpyruvate: step 6/7. Functionally, catalyzes the transfer of the enolpyruvyl moiety of phosphoenolpyruvate (PEP) to the 5-hydroxyl of shikimate-3-phosphate (S3P) to produce enolpyruvyl shikimate-3-phosphate and inorganic phosphate. This is 3-phosphoshikimate 1-carboxyvinyltransferase from Campylobacter concisus (strain 13826).